Consider the following 1363-residue polypeptide: DNA-directed RNA polymerase subunit beta (1363 aa).

This sequence belongs to the RNA polymerase beta chain family. The RNAP catalytic core consists of 2 alpha, 1 beta, 1 beta' and 1 omega subunit. When a sigma factor is associated with the core the holoenzyme is formed, which can initiate transcription.

The enzyme catalyses RNA(n) + a ribonucleoside 5'-triphosphate = RNA(n+1) + diphosphate. DNA-dependent RNA polymerase catalyzes the transcription of DNA into RNA using the four ribonucleoside triphosphates as substrates. This Syntrophus aciditrophicus (strain SB) protein is DNA-directed RNA polymerase subunit beta.